Consider the following 161-residue polypeptide: Non-secretory ribonuclease (161 aa).

A signal peptide spans 1–27; it reads MVPKLFTSQICLLLLLGLMGVEGSLHA. Tryptophan 34 carries a C-linked (Man) tryptophan glycan. Histidine 42 (proton acceptor) is an active-site residue. An N-linked (GlcNAc...) asparagine glycan is attached at asparagine 44. Intrachain disulfides connect cysteine 50–cysteine 110, cysteine 64–cysteine 123, cysteine 82–cysteine 138, and cysteine 89–cysteine 98. The residue at position 60 (tyrosine 60) is a 3'-nitrotyrosine. A substrate-binding site is contributed by 65–69; the sequence is KNQNT. Residues asparagine 86, asparagine 92, asparagine 111, and asparagine 119 are each glycosylated (N-linked (GlcNAc...) asparagine). The active-site Proton donor is the histidine 156.

Belongs to the pancreatic ribonuclease family. Interacts with and forms a tight 1:1 complex with RNH1. Dimerization of two such complexes may occur.

The protein localises to the lysosome. It localises to the cytoplasmic granule. The catalysed reaction is an [RNA] containing cytidine + H2O = an [RNA]-3'-cytidine-3'-phosphate + a 5'-hydroxy-ribonucleotide-3'-[RNA].. It carries out the reaction an [RNA] containing uridine + H2O = an [RNA]-3'-uridine-3'-phosphate + a 5'-hydroxy-ribonucleotide-3'-[RNA].. In terms of biological role, this is a non-secretory ribonuclease. It is a pyrimidine specific nuclease with a slight preference for U. Cytotoxin and helminthotoxin. Possesses a wide variety of biological activities. This chain is Non-secretory ribonuclease (RNASE2), found in Nomascus leucogenys (Northern white-cheeked gibbon).